The following is a 188-amino-acid chain: Probable nicotinate-nucleotide adenylyltransferase (188 aa).

The protein belongs to the NadD family.

It carries out the reaction nicotinate beta-D-ribonucleotide + ATP + H(+) = deamido-NAD(+) + diphosphate. Its pathway is cofactor biosynthesis; NAD(+) biosynthesis; deamido-NAD(+) from nicotinate D-ribonucleotide: step 1/1. Catalyzes the reversible adenylation of nicotinate mononucleotide (NaMN) to nicotinic acid adenine dinucleotide (NaAD). This chain is Probable nicotinate-nucleotide adenylyltransferase, found in Solibacter usitatus (strain Ellin6076).